The sequence spans 624 residues: MAPRRLLLVGEGNFSFAAALSETLDQSTQLTATCLQRPAELARDPLAWENLQCLRERGIDVRFGVDCTQLADVFELHEREFDQIYFIFPHCGRKAGVAKNRELLAKFFQSCADVLAEEGEVHVALCRGQGGTPADKPQREWHNSWQVVAMAALGGLILSDVYPFSCKAVAGYKCTGYRSQDKSFHVEGALNHIFTRSLPFEGSQPRIFRIKLGNQWFSFPEPEALVGKLNRGFLEAPSCHPIKTINEKLIAELGKVFPLKRLKCSYPLLPQEGTSVLPFWNCDFLSAAFWISLHEDNSNSESLTGGTSQDVEDFLVSFSELSLLKNPGRDGKEEACEGTCGQAKICLRPSLLVHVQDVIEVPDFLSGSLHILSGPVFQKCHILPFTMPAFHETLFILGVNQNLKDGCLQSLLDHLKGILDSLLTQTLPESSKLSSLVKFVLQSNGKDYMIRVKTHNFSPDCTEDLIIGSVITSATSVIHKDQCFVFVSMNLDLLAMLVWCISDWRMLWTFDNRFLKNFVPGKIEPFKSHSLYPPCYVHDVSFWIDQKKGFDELEFHTVARAVSQDTIISIQFLSRFQHPKTQQVSLCYRLTYQTCDKALTQQQVASMQSQFRKEIQQHLYVIPR.

One can recognise an FDX-ACB domain in the interval 531 to 624 (LYPPCYVHDV…IQQHLYVIPR (94 aa)).

The chain is Ferredoxin-fold anticodon-binding domain-containing protein 1 (FDXACB1) from Homo sapiens (Human).